The chain runs to 712 residues: Ribosomal RNA large subunit methyltransferase K/L (712 aa).

The region spanning Gly46–Leu157 is the THUMP domain.

This sequence belongs to the methyltransferase superfamily. RlmKL family.

The protein resides in the cytoplasm. It catalyses the reaction guanosine(2445) in 23S rRNA + S-adenosyl-L-methionine = N(2)-methylguanosine(2445) in 23S rRNA + S-adenosyl-L-homocysteine + H(+). The catalysed reaction is guanosine(2069) in 23S rRNA + S-adenosyl-L-methionine = N(2)-methylguanosine(2069) in 23S rRNA + S-adenosyl-L-homocysteine + H(+). Specifically methylates the guanine in position 2445 (m2G2445) and the guanine in position 2069 (m7G2069) of 23S rRNA. In Actinobacillus pleuropneumoniae serotype 7 (strain AP76), this protein is Ribosomal RNA large subunit methyltransferase K/L.